The chain runs to 177 residues: Large ribosomal subunit protein uL6 (177 aa).

The protein belongs to the universal ribosomal protein uL6 family. In terms of assembly, part of the 50S ribosomal subunit.

In terms of biological role, this protein binds to the 23S rRNA, and is important in its secondary structure. It is located near the subunit interface in the base of the L7/L12 stalk, and near the tRNA binding site of the peptidyltransferase center. In Rhodopseudomonas palustris (strain HaA2), this protein is Large ribosomal subunit protein uL6.